Here is a 289-residue protein sequence, read N- to C-terminus: Serine/threonine-protein phosphatase Pgam5, mitochondrial (289 aa).

This sequence belongs to the phosphoglycerate mutase family. BPG-dependent PGAM subfamily. Interacts with Pk92B/ASK1.

The protein localises to the mitochondrion outer membrane. It carries out the reaction O-phospho-L-seryl-[protein] + H2O = L-seryl-[protein] + phosphate. The enzyme catalyses O-phospho-L-threonyl-[protein] + H2O = L-threonyl-[protein] + phosphate. In terms of biological role, displays phosphatase activity for serine/threonine residues, and dephosphorylates and activates Pk92B kinase. Has apparently no phosphoglycerate mutase activity. The sequence is that of Serine/threonine-protein phosphatase Pgam5, mitochondrial from Drosophila yakuba (Fruit fly).